Consider the following 305-residue polypeptide: Dermonecrotic toxin LrSicTox-alphaIA1ii (305 aa).

The first 18 residues, 1-18 (MLLYVTLILGCWSAFSES), serve as a signal peptide directing secretion. A propeptide spanning residues 19-26 (AETDVAER) is cleaved from the precursor. The active site involves His37. The Mg(2+) site is built by Glu57 and Asp59. His73 functions as the Nucleophile in the catalytic mechanism. 2 disulfides stabilise this stretch: Cys77/Cys83 and Cys79/Cys222. Mg(2+) is bound at residue Asp117. The N-linked (GlcNAc...) asparagine glycan is linked to Asn282.

It belongs to the arthropod phospholipase D family. Class II subfamily. Class IIa sub-subfamily. The cofactor is Mg(2+). In terms of tissue distribution, expressed by the venom gland.

It is found in the secreted. It catalyses the reaction an N-(acyl)-sphingosylphosphocholine = an N-(acyl)-sphingosyl-1,3-cyclic phosphate + choline. The catalysed reaction is an N-(acyl)-sphingosylphosphoethanolamine = an N-(acyl)-sphingosyl-1,3-cyclic phosphate + ethanolamine. The enzyme catalyses a 1-acyl-sn-glycero-3-phosphocholine = a 1-acyl-sn-glycero-2,3-cyclic phosphate + choline. It carries out the reaction a 1-acyl-sn-glycero-3-phosphoethanolamine = a 1-acyl-sn-glycero-2,3-cyclic phosphate + ethanolamine. Its activity is regulated as follows. Inhibited with low affinity by edelfosine. In terms of biological role, dermonecrotic toxins cleave the phosphodiester linkage between the phosphate and headgroup of certain phospholipids (sphingolipid and lysolipid substrates), forming an alcohol (often choline) and a cyclic phosphate. This toxin acts on sphingomyelin (SM). It also acts on a broad range of lysophospholipids, like lysophosphatidylinositol (LPI), lysophosphatidylglycerol (LPG), lysophosphatidylethanolamine (LPE), lysobisphosphatidic acid (LBPA), lysophosphatidylserine (LPS) and lysophosphatidylcholines (LPC) of varying chain lengths. The substrate preference is LPI &gt; LPG &gt; LPS &gt; LPC &gt;&gt; LPE, LBPA. Furthermore, the enzyme also act on cyclic phosphatidic acid and lyso-platelet activating factor (LPAF, an alkyl-LPC). The enzyme does not act on sphingosylphosphorylcholine (SPC, also known as lyso-sphingomyelin) and PAF. The toxin may also act on ceramide phosphoethanolamine (CPE). It acts by transphosphatidylation, releasing exclusively cyclic phosphate products as second products. It does not exhibit detectable PLA1/2 activity. It induces dose-dependent hemolysis and dermonecrosis. Also induces increased vascular permeability, edema, inflammatory response, and platelet aggregation. This chain is Dermonecrotic toxin LrSicTox-alphaIA1ii, found in Loxosceles reclusa (Brown recluse spider).